Reading from the N-terminus, the 201-residue chain is Pyridoxal 5'-phosphate synthase subunit PdxT (201 aa).

49 to 51 contributes to the L-glutamine binding site; sequence GES. The active-site Nucleophile is Cys81. L-glutamine is bound by residues Arg110 and 139–140; that span reads IR. Residues His180 and Glu182 each act as charge relay system in the active site.

The protein belongs to the glutaminase PdxT/SNO family. In terms of assembly, in the presence of PdxS, forms a dodecamer of heterodimers. Only shows activity in the heterodimer.

The catalysed reaction is aldehydo-D-ribose 5-phosphate + D-glyceraldehyde 3-phosphate + L-glutamine = pyridoxal 5'-phosphate + L-glutamate + phosphate + 3 H2O + H(+). The enzyme catalyses L-glutamine + H2O = L-glutamate + NH4(+). Its pathway is cofactor biosynthesis; pyridoxal 5'-phosphate biosynthesis. Catalyzes the hydrolysis of glutamine to glutamate and ammonia as part of the biosynthesis of pyridoxal 5'-phosphate. The resulting ammonia molecule is channeled to the active site of PdxS. The sequence is that of Pyridoxal 5'-phosphate synthase subunit PdxT from Salinispora arenicola (strain CNS-205).